The chain runs to 119 residues: Large ribosomal subunit protein uL18 (119 aa).

The protein belongs to the universal ribosomal protein uL18 family. Part of the 50S ribosomal subunit; part of the 5S rRNA/L5/L18/L25 subcomplex. Contacts the 5S and 23S rRNAs.

Functionally, this is one of the proteins that bind and probably mediate the attachment of the 5S RNA into the large ribosomal subunit, where it forms part of the central protuberance. The polypeptide is Large ribosomal subunit protein uL18 (Xylella fastidiosa (strain M23)).